The chain runs to 480 residues: UDP-N-acetylmuramate--L-alanine ligase (480 aa).

122 to 128 (GTHGKTT) is a binding site for ATP.

Belongs to the MurCDEF family.

The protein resides in the cytoplasm. It carries out the reaction UDP-N-acetyl-alpha-D-muramate + L-alanine + ATP = UDP-N-acetyl-alpha-D-muramoyl-L-alanine + ADP + phosphate + H(+). It functions in the pathway cell wall biogenesis; peptidoglycan biosynthesis. Cell wall formation. The sequence is that of UDP-N-acetylmuramate--L-alanine ligase from Pseudomonas paraeruginosa (strain DSM 24068 / PA7) (Pseudomonas aeruginosa (strain PA7)).